Reading from the N-terminus, the 320-residue chain is Nucleotide-binding protein Acid_7395 (320 aa).

Residues methionine 1–glutamine 34 form a disordered region. Residue glycine 44–glycine 51 coordinates ATP. Aspartate 94 to glutamate 97 serves as a coordination point for GTP.

The protein belongs to the RapZ-like family.

Its function is as follows. Displays ATPase and GTPase activities. In Solibacter usitatus (strain Ellin6076), this protein is Nucleotide-binding protein Acid_7395.